The sequence spans 800 residues: Phenylalanine--tRNA ligase beta subunit (800 aa).

The tRNA-binding domain maps to 39–152; that stretch reads AAGLSKIVVG…EDAVPGEEVF (114 aa). The B5 domain occupies 405–480; that stretch reads TSDVEVSSTL…RIYGYDRLPT (76 aa). Residues D458, D464, E467, and E468 each contribute to the Mg(2+) site. The region spanning 707–800 is the FDX-ACB domain; it reads TKFPAVSRDV…LEEKVNAEVR (94 aa).

Belongs to the phenylalanyl-tRNA synthetase beta subunit family. Type 1 subfamily. In terms of assembly, tetramer of two alpha and two beta subunits. It depends on Mg(2+) as a cofactor.

It localises to the cytoplasm. The catalysed reaction is tRNA(Phe) + L-phenylalanine + ATP = L-phenylalanyl-tRNA(Phe) + AMP + diphosphate + H(+). In Streptococcus pneumoniae (strain ATCC BAA-255 / R6), this protein is Phenylalanine--tRNA ligase beta subunit.